The sequence spans 498 residues: UDP-N-acetylmuramate--L-alanine ligase (498 aa).

ATP is bound at residue 120-126 (GSHGKTT).

Belongs to the MurCDEF family.

The protein resides in the cytoplasm. The catalysed reaction is UDP-N-acetyl-alpha-D-muramate + L-alanine + ATP = UDP-N-acetyl-alpha-D-muramoyl-L-alanine + ADP + phosphate + H(+). The protein operates within cell wall biogenesis; peptidoglycan biosynthesis. Cell wall formation. This Rickettsia typhi (strain ATCC VR-144 / Wilmington) protein is UDP-N-acetylmuramate--L-alanine ligase.